A 780-amino-acid polypeptide reads, in one-letter code: Phosphoenolpyruvate synthase (780 aa).

Histidine 409 acts as the Tele-phosphohistidine intermediate in catalysis. Substrate contacts are provided by arginine 499, arginine 566, glutamate 668, glycine 689, serine 690, asparagine 691, and aspartate 692. Glutamate 668 provides a ligand contact to Mg(2+). Aspartate 692 contacts Mg(2+).

The protein belongs to the PEP-utilizing enzyme family. Requires Mg(2+) as cofactor.

The catalysed reaction is pyruvate + ATP + H2O = phosphoenolpyruvate + AMP + phosphate + 2 H(+). Its pathway is carbohydrate biosynthesis; gluconeogenesis. Catalyzes the phosphorylation of pyruvate to phosphoenolpyruvate. The protein is Phosphoenolpyruvate synthase (ppsA) of Deinococcus radiodurans (strain ATCC 13939 / DSM 20539 / JCM 16871 / CCUG 27074 / LMG 4051 / NBRC 15346 / NCIMB 9279 / VKM B-1422 / R1).